The sequence spans 292 residues: UDP-N-acetylenolpyruvoylglucosamine reductase (292 aa).

The FAD-binding PCMH-type domain occupies 21-186; it reads QAGGLVDYLA…ISATFELQPD (166 aa). Arg165 is a catalytic residue. The active-site Proton donor is the Ser215. The active site involves Glu285.

It belongs to the MurB family. Requires FAD as cofactor.

It is found in the cytoplasm. It carries out the reaction UDP-N-acetyl-alpha-D-muramate + NADP(+) = UDP-N-acetyl-3-O-(1-carboxyvinyl)-alpha-D-glucosamine + NADPH + H(+). It participates in cell wall biogenesis; peptidoglycan biosynthesis. Its function is as follows. Cell wall formation. The sequence is that of UDP-N-acetylenolpyruvoylglucosamine reductase from Leuconostoc mesenteroides subsp. mesenteroides (strain ATCC 8293 / DSM 20343 / BCRC 11652 / CCM 1803 / JCM 6124 / NCDO 523 / NBRC 100496 / NCIMB 8023 / NCTC 12954 / NRRL B-1118 / 37Y).